We begin with the raw amino-acid sequence, 1653 residues long: Protein TOPAZ1 (1653 aa).

Disordered stretches follow at residues Met1–Asp88, Gly212–Ser238, Lys553–Arg591, Pro855–Lys893, and Glu919–Leu942. Composition is skewed to basic and acidic residues over residues Ser58–Ala69 and Ser221–Asp236. Positions Arg561 to Gly585 are enriched in polar residues. Basic and acidic residues-rich tracts occupy residues Ala858–Pro877 and Val920–Leu942.

The protein localises to the cytoplasm. The protein resides in the cytosol. Important for normal spermatogenesis and male fertility. Specifically required for progression to the post-meiotic stages of spermatocyte development. Seems to be necessary for normal expression levels of a number of testis-expressed gene transcripts, although its role in this process is unclear. The polypeptide is Protein TOPAZ1 (TOPAZ1) (Bos taurus (Bovine)).